The sequence spans 156 residues: UPF0523 protein C (156 aa).

It belongs to the UPF0523 family.

This is UPF0523 protein C from Dictyostelium discoideum (Social amoeba).